We begin with the raw amino-acid sequence, 825 residues long: 5E5 antigen (825 aa).

Residues Leu126–Arg825 are disordered. Over residues Pro157–Leu180 the composition is skewed to pro residues. Positions Val191–Met200 are enriched in polar residues. Basic and acidic residues predominate over residues Thr217–Arg237. Residues Gln247 to Pro256 are compositionally biased toward low complexity. 3 stretches are compositionally biased toward basic and acidic residues: residues Ser257 to Glu277, Val315 to Thr342, and Gln392 to Arg406. Positions Arg437 to Met449 are enriched in basic residues. The span at Thr455 to Gly477 shows a compositional bias: low complexity. Basic residues predominate over residues Gly485 to Gly505. The segment covering Gly524–Gln536 has biased composition (polar residues). Positions Thr537 to Leu562 are enriched in low complexity. A compositionally biased stretch (basic residues) spans Arg565–Arg575. The segment covering Arg576 to Gly588 has biased composition (gly residues). Positions Phe721–Leu733 are enriched in pro residues. Low complexity predominate over residues Leu734–Pro750.

In terms of tissue distribution, expressed in neurons.

The protein localises to the nucleus. Its function is as follows. Might have DNA-binding ability. The protein is 5E5 antigen of Rattus norvegicus (Rat).